The following is a 72-amino-acid chain: Translation initiation factor IF-1 (72 aa).

One can recognise an S1-like domain in the interval 1-72; it reads MAKEDSIEMQ…SKGRIVFRSR (72 aa).

The protein belongs to the IF-1 family. As to quaternary structure, component of the 30S ribosomal translation pre-initiation complex which assembles on the 30S ribosome in the order IF-2 and IF-3, IF-1 and N-formylmethionyl-tRNA(fMet); mRNA recruitment can occur at any time during PIC assembly.

The protein resides in the cytoplasm. Functionally, one of the essential components for the initiation of protein synthesis. Stabilizes the binding of IF-2 and IF-3 on the 30S subunit to which N-formylmethionyl-tRNA(fMet) subsequently binds. Helps modulate mRNA selection, yielding the 30S pre-initiation complex (PIC). Upon addition of the 50S ribosomal subunit IF-1, IF-2 and IF-3 are released leaving the mature 70S translation initiation complex. In Aeromonas hydrophila subsp. hydrophila (strain ATCC 7966 / DSM 30187 / BCRC 13018 / CCUG 14551 / JCM 1027 / KCTC 2358 / NCIMB 9240 / NCTC 8049), this protein is Translation initiation factor IF-1.